Here is a 444-residue protein sequence, read N- to C-terminus: 23S rRNA (uracil(1939)-C(5))-methyltransferase RlmD (444 aa).

Residues 11-70 (NSIKNHILKNIKVEKLDHRGRGLAYFQNKPLFIDGALAGELLEVQIVESKKRYSKGKIKK) form the TRAM domain. Positions 83, 89, 92, and 171 each coordinate [4Fe-4S] cluster. S-adenosyl-L-methionine-binding residues include Gln-277, Phe-306, Asn-311, Glu-327, Asp-354, and Asp-376. Cys-402 (nucleophile) is an active-site residue.

This sequence belongs to the class I-like SAM-binding methyltransferase superfamily. RNA M5U methyltransferase family. RlmD subfamily.

It catalyses the reaction uridine(1939) in 23S rRNA + S-adenosyl-L-methionine = 5-methyluridine(1939) in 23S rRNA + S-adenosyl-L-homocysteine + H(+). Its function is as follows. Catalyzes the formation of 5-methyl-uridine at position 1939 (m5U1939) in 23S rRNA. This is 23S rRNA (uracil(1939)-C(5))-methyltransferase RlmD from Psychromonas ingrahamii (strain DSM 17664 / CCUG 51855 / 37).